The sequence spans 182 residues: MSVLDENQKQFLLDSIRNIPDFPKPGIQFKDITTLLNDPKAFGFLIDFLTDRYARFELDYVAGIESRGFIFGAALAAKLEVGFVPIRKKGKLPSTTIAEKYSLEYGFDEVEIHIDAFREKEGSRVLLIDDLIATGGTAEAAVKLIQSAKGHCVEACFLLNLEELGGAKKVSNLAPLYTLLDI.

Belongs to the purine/pyrimidine phosphoribosyltransferase family. In terms of assembly, homodimer.

It is found in the cytoplasm. It catalyses the reaction AMP + diphosphate = 5-phospho-alpha-D-ribose 1-diphosphate + adenine. It participates in purine metabolism; AMP biosynthesis via salvage pathway; AMP from adenine: step 1/1. Functionally, catalyzes a salvage reaction resulting in the formation of AMP, that is energically less costly than de novo synthesis. This chain is Adenine phosphoribosyltransferase, found in Wolinella succinogenes (strain ATCC 29543 / DSM 1740 / CCUG 13145 / JCM 31913 / LMG 7466 / NCTC 11488 / FDC 602W) (Vibrio succinogenes).